Reading from the N-terminus, the 294-residue chain is 4-hydroxy-tetrahydrodipicolinate synthase (294 aa).

Thr-47 lines the pyruvate pocket. Residue Tyr-135 is the Proton donor/acceptor of the active site. The active-site Schiff-base intermediate with substrate is the Lys-163. Ile-206 is a binding site for pyruvate.

This sequence belongs to the DapA family. As to quaternary structure, homodimer.

The protein localises to the cytoplasm. It catalyses the reaction L-aspartate 4-semialdehyde + pyruvate = (2S,4S)-4-hydroxy-2,3,4,5-tetrahydrodipicolinate + H2O + H(+). It participates in amino-acid biosynthesis; L-lysine biosynthesis via DAP pathway; (S)-tetrahydrodipicolinate from L-aspartate: step 3/4. In terms of biological role, catalyzes the condensation of (S)-aspartate-beta-semialdehyde [(S)-ASA] and pyruvate to 4-hydroxy-tetrahydrodipicolinate (HTPA). This Staphylococcus carnosus (strain TM300) protein is 4-hydroxy-tetrahydrodipicolinate synthase.